Reading from the N-terminus, the 233-residue chain is Large ribosomal subunit protein uL1 (233 aa).

It belongs to the universal ribosomal protein uL1 family. Part of the 50S ribosomal subunit.

Binds directly to 23S rRNA. The L1 stalk is quite mobile in the ribosome, and is involved in E site tRNA release. In terms of biological role, protein L1 is also a translational repressor protein, it controls the translation of the L11 operon by binding to its mRNA. This chain is Large ribosomal subunit protein uL1, found in Vibrio campbellii (strain ATCC BAA-1116).